Consider the following 447-residue polypeptide: Probable protein phosphatase 2C 71 (447 aa).

The PPM-type phosphatase domain maps to 33–279 (SYGYASSAGK…DNITCVVVRF (247 aa)). Mn(2+) contacts are provided by aspartate 69, glycine 70, aspartate 231, and aspartate 270. The span at 284 to 297 (SANNNGSSSSEEAN) shows a compositional bias: low complexity. Residues 284 to 447 (SANNNGSSSS…ARKTTPSIFN (164 aa)) form a disordered region. The segment covering 305-331 (NDSDHKISAKETNQDHTTVNKDLDRNT) has biased composition (basic and acidic residues). Composition is skewed to polar residues over residues 346–374 (ADNS…TGEK) and 392–423 (KVPN…GSTG). Basic and acidic residues predominate over residues 424–438 (ERNRKPIKVHSDSAA).

It belongs to the PP2C family. Requires Mg(2+) as cofactor. Mn(2+) serves as cofactor.

The enzyme catalyses O-phospho-L-seryl-[protein] + H2O = L-seryl-[protein] + phosphate. It catalyses the reaction O-phospho-L-threonyl-[protein] + H2O = L-threonyl-[protein] + phosphate. In Arabidopsis thaliana (Mouse-ear cress), this protein is Probable protein phosphatase 2C 71.